Here is a 197-residue protein sequence, read N- to C-terminus: Putative sulfur carrier protein aq_1421 (197 aa).

The active-site Cysteine persulfide intermediate is C17.

The protein belongs to the sulfur carrier protein TusA family.

This Aquifex aeolicus (strain VF5) protein is Putative sulfur carrier protein aq_1421.